The following is a 233-amino-acid chain: tRNA (guanine-N(7)-)-methyltransferase (233 aa).

Positions 62, 87, 116, and 138 each coordinate S-adenosyl-L-methionine. Aspartate 138 is a catalytic residue. Residues lysine 142, aspartate 174, and 212–215 (TRYE) contribute to the substrate site.

This sequence belongs to the class I-like SAM-binding methyltransferase superfamily. TrmB family.

It carries out the reaction guanosine(46) in tRNA + S-adenosyl-L-methionine = N(7)-methylguanosine(46) in tRNA + S-adenosyl-L-homocysteine. Its pathway is tRNA modification; N(7)-methylguanine-tRNA biosynthesis. Catalyzes the formation of N(7)-methylguanine at position 46 (m7G46) in tRNA. In Bartonella henselae (strain ATCC 49882 / DSM 28221 / CCUG 30454 / Houston 1) (Rochalimaea henselae), this protein is tRNA (guanine-N(7)-)-methyltransferase.